A 284-amino-acid polypeptide reads, in one-letter code: MRLIIVSGRSGSGKSTALDVLEDSGFYCIDNLPAGLLPQLAENALINTELLQPKVAVSIDARNLPSHLMRFPELLEEARARHIQCDVLYLDADEEVLLKRFSETRRRHPLTNANRSLAEAIRVESDLLGPIADLADLKIDTTNLNLYQLRDSIKLRLLNQPEPGTAFLVESFGFKRGMPVDADLVFDVRCLPNPYWKPELREHSGLDQPVIDYLAAQPDVEDMYNDISSYLLKWLPRFAASNRAYVTIAIGCTGGHHRSVYITERLGRQLQQTLKNVQVRHRDL.

8 to 15 (GRSGSGKS) contacts ATP. Position 60–63 (60–63 (DARN)) interacts with GTP.

It belongs to the RapZ-like family.

Its function is as follows. Displays ATPase and GTPase activities. The sequence is that of Nucleotide-binding protein PP_0949 from Pseudomonas putida (strain ATCC 47054 / DSM 6125 / CFBP 8728 / NCIMB 11950 / KT2440).